The primary structure comprises 470 residues: Zinc finger CCCH domain-containing protein 7 (470 aa).

A disordered region spans residues Ala-122–His-144. A compositionally biased stretch (polar residues) spans Gln-131–Arg-142. C3H1-type zinc fingers lie at residues Ala-240–Ser-269, Val-273–Ile-294, Pro-295–Val-321, Asn-322–Asn-349, and Cys-350–Asn-372. Residues Pro-370 to Arg-381 are compositionally biased toward basic residues. The disordered stretch occupies residues Pro-370–Asn-389.

Its function is as follows. Possesses RNA-binding and ribonuclease activities in vitro. In Arabidopsis thaliana (Mouse-ear cress), this protein is Zinc finger CCCH domain-containing protein 7.